Reading from the N-terminus, the 393-residue chain is Acetate kinase (393 aa).

Asparagine 6 is a binding site for Mg(2+). An ATP-binding site is contributed by lysine 13. Arginine 87 serves as a coordination point for substrate. The active-site Proton donor/acceptor is aspartate 143. Residues 203–207 (HLGNG), 278–280 (DMR), and 326–330 (GIGEN) contribute to the ATP site. Glutamate 380 lines the Mg(2+) pocket.

Belongs to the acetokinase family. As to quaternary structure, homodimer. Requires Mg(2+) as cofactor. Mn(2+) is required as a cofactor.

The protein localises to the cytoplasm. It carries out the reaction acetate + ATP = acetyl phosphate + ADP. It functions in the pathway metabolic intermediate biosynthesis; acetyl-CoA biosynthesis; acetyl-CoA from acetate: step 1/2. Catalyzes the formation of acetyl phosphate from acetate and ATP. Can also catalyze the reverse reaction. The chain is Acetate kinase from Mycoplasma mycoides subsp. mycoides SC (strain CCUG 32753 / NCTC 10114 / PG1).